Here is a 388-residue protein sequence, read N- to C-terminus: Beta-1,4-galactosyltransferase 5 (388 aa).

Residues 1–14 (MRARRGLLRLPRRS) lie on the Cytoplasmic side of the membrane. The helical; Signal-anchor for type II membrane protein transmembrane segment at 15–35 (LLAALFFFSLSSSLLYFVYVA) threads the bilayer. The Lumenal segment spans residues 36 to 388 (PGIVNTYLFM…TPELAQVTEY (353 aa)). Residues asparagine 77, asparagine 81, asparagine 90, and asparagine 128 are each glycosylated (N-linked (GlcNAc...) asparagine). A disulfide bridge links cysteine 114 with cysteine 158. Residues 169–173 (PFRNR), 208–210 (FNR), 235–236 (VD), tyrosine 264, and tryptophan 296 contribute to the UDP-alpha-D-galactose site. A disulfide bridge connects residues cysteine 229 and cysteine 248. Aspartate 236 contacts Mn(2+). 298-301 (GEDD) is a binding site for N-acetyl-D-glucosamine. Histidine 329 lines the Mn(2+) pocket. 329–330 (HH) is a UDP-alpha-D-galactose binding site. Arginine 340 provides a ligand contact to N-acetyl-D-glucosamine. N-linked (GlcNAc...) asparagine glycosylation is found at asparagine 360, asparagine 364, and asparagine 373.

Belongs to the glycosyltransferase 7 family. Mn(2+) serves as cofactor. Highest levels in heart, brain, liver and kidney with lower levels in spleen, lung and testis.

The protein resides in the golgi apparatus. Its subcellular location is the golgi stack membrane. The catalysed reaction is a beta-D-glucosyl-(1&lt;-&gt;1')-N-acylsphing-4-enine + UDP-alpha-D-galactose = a beta-D-Gal-(1-&gt;4)-beta-D-Glc-(1&lt;-&gt;1)-Cer(d18:1(4E)) + UDP + H(+). It functions in the pathway protein modification; protein glycosylation. Its pathway is sphingolipid metabolism. Catalyzes the synthesis of lactosylceramide (LacCer) via the transfer of galactose from UDP-galactose to glucosylceramide (GlcCer). LacCer is the starting point in the biosynthesis of all gangliosides (membrane-bound glycosphingolipids) which play pivotal roles in the CNS including neuronal maturation and axonal and myelin formation. Plays a role in the glycosylation of BMPR1A and regulation of its protein stability. Essential for extraembryonic development during early embryogenesis. This Mus musculus (Mouse) protein is Beta-1,4-galactosyltransferase 5.